Here is a 434-residue protein sequence, read N- to C-terminus: Enolase (434 aa).

Residue glutamine 166 coordinates (2R)-2-phosphoglycerate. The active-site Proton donor is glutamate 208. Residues aspartate 245, glutamate 290, and aspartate 317 each coordinate Mg(2+). (2R)-2-phosphoglycerate contacts are provided by lysine 342, arginine 371, serine 372, and lysine 393. Catalysis depends on lysine 342, which acts as the Proton acceptor.

The protein belongs to the enolase family. Mg(2+) is required as a cofactor.

It is found in the cytoplasm. The protein localises to the secreted. It localises to the cell surface. It carries out the reaction (2R)-2-phosphoglycerate = phosphoenolpyruvate + H2O. It participates in carbohydrate degradation; glycolysis; pyruvate from D-glyceraldehyde 3-phosphate: step 4/5. In terms of biological role, catalyzes the reversible conversion of 2-phosphoglycerate (2-PG) into phosphoenolpyruvate (PEP). It is essential for the degradation of carbohydrates via glycolysis. This is Enolase from Caldicellulosiruptor saccharolyticus (strain ATCC 43494 / DSM 8903 / Tp8T 6331).